Here is an 83-residue protein sequence, read N- to C-terminus: Calsensin (83 aa).

EF-hand domains are found at residues 4–39 (KVKAELEAAFKKLDANGDGYVTALELQTFMVTLDAY) and 46–81 (KVKEASAKLIKMADKNSDGKISKEEFLNANAELLCQ). Positions 17, 19, 21, 23, 28, 59, 61, 63, 65, and 70 each coordinate Ca(2+).

Selectively expressed in a small group of neurons.

The protein resides in the cytoplasm. Functionally, may function as a trigger protein which interacts with a larger protein. May mediate calcium-dependent signal transduction events in the growth cones and axons of a small group of sensory neurons which fasciculate in a single axon tract. In Haemopis marmorata (Green horse leech), this protein is Calsensin.